Reading from the N-terminus, the 666-residue chain is ATP synthase subunit alpha 2 (666 aa).

Glycine 182 to threonine 189 is an ATP binding site. The disordered stretch occupies residues methionine 527–arginine 666. Positions alanine 545 to alanine 590 are enriched in basic and acidic residues. Low complexity predominate over residues alanine 591–proline 601. Residues alanine 623–alanine 641 show a composition bias toward basic and acidic residues.

This sequence belongs to the ATPase alpha/beta chains family. As to quaternary structure, F-type ATPases have 2 components, CF(1) - the catalytic core - and CF(0) - the membrane proton channel. CF(1) has five subunits: alpha(3), beta(3), gamma(1), delta(1), epsilon(1). CF(0) has three main subunits: a(1), b(2) and c(9-12). The alpha and beta chains form an alternating ring which encloses part of the gamma chain. CF(1) is attached to CF(0) by a central stalk formed by the gamma and epsilon chains, while a peripheral stalk is formed by the delta and b chains.

The protein localises to the cell inner membrane. The catalysed reaction is ATP + H2O + 4 H(+)(in) = ADP + phosphate + 5 H(+)(out). Functionally, produces ATP from ADP in the presence of a proton gradient across the membrane. The alpha chain is a regulatory subunit. The polypeptide is ATP synthase subunit alpha 2 (Burkholderia pseudomallei (strain 1106a)).